We begin with the raw amino-acid sequence, 114 residues long: uncharacterized protein (114 aa).

Positions 1–114 are disordered; sequence MSTAASSRMR…HASQSPDTAY (114 aa). The span at 32 to 43 shows a compositional bias: low complexity; that stretch reads CRRVPSRPCRPV.

This is an uncharacterized protein from Human adenovirus B serotype 7 (HAdV-7).